The sequence spans 242 residues: uncharacterized protein (242 aa).

Positions 198, 218, and 227 each coordinate S-adenosyl-L-methionine.

It belongs to the class IV-like SAM-binding methyltransferase superfamily. RNA methyltransferase TrmH family.

This is an uncharacterized protein from Mycoplasma genitalium (strain ATCC 33530 / DSM 19775 / NCTC 10195 / G37) (Mycoplasmoides genitalium).